Here is a 196-residue protein sequence, read N- to C-terminus: Probable malonic semialdehyde reductase RutE (196 aa).

Belongs to the nitroreductase family. HadB/RutE subfamily. The cofactor is FMN.

It catalyses the reaction 3-hydroxypropanoate + NADP(+) = 3-oxopropanoate + NADPH + H(+). Functionally, may reduce toxic product malonic semialdehyde to 3-hydroxypropionic acid, which is excreted. The sequence is that of Probable malonic semialdehyde reductase RutE from Shigella dysenteriae serotype 1 (strain Sd197).